Reading from the N-terminus, the 94-residue chain is Serine protease inhibitor Kazal-type 13 (94 aa).

An N-terminal signal peptide occupies residues 1–23 (MAAFPHKIIFFLVCSTLTHVAFS). A Kazal-like domain is found at 33 to 94 (RWPKPRCKMY…IKFEKYGKCD (62 aa)). 3 disulfides stabilise this stretch: cysteine 39-cysteine 75, cysteine 53-cysteine 72, and cysteine 61-cysteine 93. Asparagine 55 is a glycosylation site (N-linked (GlcNAc...) asparagine).

Its subcellular location is the secreted. In terms of biological role, may be a serine protease inhibitor. Essential for sperm maturation and fertility. Inhibits sperm acrosome reaction, protecting sperm from premature reaction. This Homo sapiens (Human) protein is Serine protease inhibitor Kazal-type 13 (SPINK13).